Here is a 1374-residue protein sequence, read N- to C-terminus: Serine/threonine-protein kinase LMTK1 (1374 aa).

A helical membrane pass occupies residues leucine 32–cysteine 52. One can recognise a Protein kinase domain in the interval leucine 125–leucine 395. Residues isoleucine 131–valine 139 and lysine 156 contribute to the ATP site. The active-site Proton acceptor is the aspartate 253. Serine 495 is subject to Phosphoserine. Disordered regions lie at residues glycine 542 to glycine 622, valine 667 to leucine 731, tryptophan 765 to proline 1195, glutamine 1245 to aspartate 1302, and alanine 1320 to alanine 1374. Low complexity predominate over residues proline 606 to alanine 620. The segment covering serine 680–serine 690 has biased composition (polar residues). Low complexity-rich tracts occupy residues proline 719–leucine 731, serine 801–threonine 831, and serine 847–proline 856. Over residues glutamate 865–glycine 878 the composition is skewed to polar residues. Residues proline 900 to aspartate 914 show a composition bias toward low complexity. The segment covering arginine 978–asparagine 987 has biased composition (polar residues). Serine 1029 carries the post-translational modification Phosphoserine. Positions glutamate 1063–proline 1073 are enriched in polar residues. The segment covering threonine 1138 to glutamate 1155 has biased composition (low complexity). The segment covering proline 1158–glutamate 1173 has biased composition (acidic residues). Serine 1168, serine 1171, serine 1184, serine 1187, and serine 1262 each carry phosphoserine. The segment covering glycine 1272 to threonine 1291 has biased composition (polar residues). Residues alanine 1321–alanine 1332 show a composition bias toward pro residues. The span at phenylalanine 1337–valine 1352 shows a compositional bias: polar residues. Over residues serine 1353–proline 1363 the composition is skewed to basic and acidic residues. The span at alanine 1365–alanine 1374 shows a compositional bias: gly residues.

Belongs to the protein kinase superfamily. Tyr protein kinase family. Interacts with CDK5. Post-translationally, autophosphorylated. Phosphorylated by CDK5. Expressed in brain.

It localises to the membrane. The protein localises to the cytoplasm. The protein resides in the perinuclear region. The catalysed reaction is L-seryl-[protein] + ATP = O-phospho-L-seryl-[protein] + ADP + H(+). The enzyme catalyses L-threonyl-[protein] + ATP = O-phospho-L-threonyl-[protein] + ADP + H(+). Its function is as follows. May be involved in neuronal differentiation. In Homo sapiens (Human), this protein is Serine/threonine-protein kinase LMTK1 (AATK).